The chain runs to 309 residues: Cytochrome c biogenesis protein CcsA (309 aa).

The next 8 membrane-spanning stretches (helical) occupy residues 18 to 38 (LGLLVFYFLLINLPISLGAVF), 43 to 63 (SFAVRLITILVNLLITLQLLF), 73 to 93 (ISNLYESLYFLAWGITLGQLL), 102 to 122 (IIPSIAIPIELLIVSFACFVL), 148 to 168 (VMLSYAALIIGSLLSMSVLFI), 216 to 236 (SILIGFVLLTLGLISGAVWAN), 250 to 267 (TWAFISWLFYAAYLHMRI), and 279 to 299 (LASTGFLVVLVCYLGVNFLGI).

It belongs to the CcmF/CycK/Ccl1/NrfE/CcsA family. As to quaternary structure, may interact with ccs1.

The protein resides in the cellular thylakoid membrane. In terms of biological role, required during biogenesis of c-type cytochromes (cytochrome c6 and cytochrome f) at the step of heme attachment. This is Cytochrome c biogenesis protein CcsA from Prochlorococcus marinus (strain MIT 9301).